Here is a 51-residue protein sequence, read N- to C-terminus: uncharacterized protein (51 aa).

This is an uncharacterized protein from Rickettsia conorii (strain ATCC VR-613 / Malish 7).